The following is a 433-amino-acid chain: Gamma-glutamyl phosphate reductase 1 (433 aa).

The protein belongs to the gamma-glutamyl phosphate reductase family.

The protein localises to the cytoplasm. The enzyme catalyses L-glutamate 5-semialdehyde + phosphate + NADP(+) = L-glutamyl 5-phosphate + NADPH + H(+). Its pathway is amino-acid biosynthesis; L-proline biosynthesis; L-glutamate 5-semialdehyde from L-glutamate: step 2/2. Catalyzes the NADPH-dependent reduction of L-glutamate 5-phosphate into L-glutamate 5-semialdehyde and phosphate. The product spontaneously undergoes cyclization to form 1-pyrroline-5-carboxylate. This is Gamma-glutamyl phosphate reductase 1 from Synechocystis sp. (strain ATCC 27184 / PCC 6803 / Kazusa).